The chain runs to 1148 residues: Putative transcription factor SEF1 (1148 aa).

Residues 1-51 (MVKDNRDSDQDQDFSSAHMKRQPEQQQLQQHQFPSKKQRISHHDDSHQINH) form a disordered region. S8 carries the phosphoserine modification. The zn(2)-C6 fungal-type DNA-binding region spans 57–87 (CTHCRQHKIKCDASQNFPHPCSRCEKIGLHC). Positions 148-180 (PTPGTIIPNPDSSPSSGSPTSSAAQRDSKVSVQ) are disordered. A compositionally biased stretch (low complexity) spans 150-169 (PGTIIPNPDSSPSSGSPTSS). At S263 the chain carries Phosphoserine. The tract at residues 524 to 550 (EESEEDNNDSIDNNNNDKRNKKDEPHV) is disordered. The span at 538–550 (NNDKRNKKDEPHV) shows a compositional bias: basic and acidic residues. A Phosphoserine modification is found at S806. Over residues 1029–1050 (RSQSSMSHSRTPIASKSNNMTD) the composition is skewed to polar residues. The disordered stretch occupies residues 1029 to 1063 (RSQSSMSHSRTPIASKSNNMTDLHSVVSDPGSSKS).

Its subcellular location is the nucleus. Functionally, putative transcription factor that seems to be involved in the sporulation process. Suppresses the lethal phenotype of RPM2 deletion. This is Putative transcription factor SEF1 (SEF1) from Saccharomyces cerevisiae (strain ATCC 204508 / S288c) (Baker's yeast).